A 591-amino-acid polypeptide reads, in one-letter code: Aspartate--tRNA(Asp/Asn) ligase (591 aa).

Glutamate 174 lines the L-aspartate pocket. The interval 198–201 (QLFK) is aspartate. Position 220 (arginine 220) interacts with L-aspartate. ATP is bound by residues 220–222 (RDE) and glutamine 229. Histidine 450 lines the L-aspartate pocket. Glutamate 483 serves as a coordination point for ATP. Residue arginine 490 coordinates L-aspartate. Residue 535 to 538 (GLDR) coordinates ATP.

This sequence belongs to the class-II aminoacyl-tRNA synthetase family. Type 1 subfamily. In terms of assembly, homodimer.

It localises to the cytoplasm. The enzyme catalyses tRNA(Asx) + L-aspartate + ATP = L-aspartyl-tRNA(Asx) + AMP + diphosphate. In terms of biological role, aspartyl-tRNA synthetase with relaxed tRNA specificity since it is able to aspartylate not only its cognate tRNA(Asp) but also tRNA(Asn). Reaction proceeds in two steps: L-aspartate is first activated by ATP to form Asp-AMP and then transferred to the acceptor end of tRNA(Asp/Asn). The polypeptide is Aspartate--tRNA(Asp/Asn) ligase (Pseudomonas syringae pv. syringae (strain B728a)).